Reading from the N-terminus, the 250-residue chain is Adenosylcobinamide-GDP ribazoletransferase (250 aa).

A run of 6 helical transmembrane segments spans residues 32–52, 59–79, 113–133, 136–156, 185–205, and 230–250; these read KGII…MVAY, LAHS…TGGL, GVLA…GLGE, IYWG…YGCY, LTFI…LLPI, and CELT…AGLF.

This sequence belongs to the CobS family. Mg(2+) serves as cofactor.

It is found in the cell membrane. The catalysed reaction is alpha-ribazole + adenosylcob(III)inamide-GDP = adenosylcob(III)alamin + GMP + H(+). The enzyme catalyses alpha-ribazole 5'-phosphate + adenosylcob(III)inamide-GDP = adenosylcob(III)alamin 5'-phosphate + GMP + H(+). The protein operates within cofactor biosynthesis; adenosylcobalamin biosynthesis; adenosylcobalamin from cob(II)yrinate a,c-diamide: step 7/7. Joins adenosylcobinamide-GDP and alpha-ribazole to generate adenosylcobalamin (Ado-cobalamin). Also synthesizes adenosylcobalamin 5'-phosphate from adenosylcobinamide-GDP and alpha-ribazole 5'-phosphate. The chain is Adenosylcobinamide-GDP ribazoletransferase from Alkaliphilus metalliredigens (strain QYMF).